Consider the following 343-residue polypeptide: NAC domain-containing protein 4 (343 aa).

One can recognise an NAC domain in the interval 12-168 (LPPGFRFHPT…EWVLCRVFKK (157 aa)). A DNA-binding region spans residues 109 to 174 (VGMKKTLVFY…VFKKSLVEVG (66 aa)). The tract at residues 304–333 (GGERERLSASQDTGLTSDVNPEISSSSGQK) is disordered. Over residues 311-332 (SASQDTGLTSDVNPEISSSSGQ) the composition is skewed to polar residues.

Expressed in roots, tiller buds, stems, leaves, lamina joints and the young husks. Expressed in embryos, coleoptiles, radicles, leaf pulvinus, ligules, panicles, palea and lemma, anthers, and the internode of the peduncles. Expressed in young leaves, root meristems, florescence meristems and young spikelets.

It localises to the nucleus. In terms of biological role, transcription factor involved in the regulation of tiller bud outgrowth, but does not seem to regulate tiller bud initiation. Possesses transactivation activity in yeast. Involved in the regulation of plant architecture and grain yield. Acts as a negative regulator of plant height and flowering time. Regulates directly key genes of the gibberellin (GA) pathway by binding to their promoters. Positively regulates leaf senescence in an age-dependent manner. Activates directly the expression of the chlorophyll degradation genes SGR and NYC3. Positively regulates the level of abscisic acid (ABA) by directly up-regulating the expression of the ABA biosynthetic genes NCED3 and ZEP, and down-regulating the ABA catabolic gene CYP707A5/ABA8OX1. Promotes salt-induced cell death accompanied by the loss of plasma membrane integrity, nuclear DNA fragmentation, and changes of caspase-like activity. Targets genes that encoded a reactive oxygen species (ROS) scavenger COX11 and a caspase-like protease AP37. Activates the potassium efflux channels GORK and SKOR. Acts as a positive regulator of drought and salt tolerance through ABA-mediated pathways. Acts as a negative regulator of root growth. Functions as an upstream integrator of auxin and cytokinin signals that affect CROWN ROOTLESS (CRL) and cyclin-dependent protein kinase (CDK) genes to regulate cell division during root development. Binds directly to the promoters of the auxin inactivation-related genes GH3.6 and GH3.8, the auxin signaling-related gene ARF25, and the cytokinin oxidase gene CKX4. Activates directly the expressions of the 1-aminocyclopropane-1-carboxylate oxidase genes ACO1 and ACO3, enhancing ethylene synthesis, and then retarding seedling establishment. In Oryza sativa subsp. japonica (Rice), this protein is NAC domain-containing protein 4.